Reading from the N-terminus, the 208-residue chain is Sodium/potassium-transporting ATPase subunit beta-1-interacting protein 2 (208 aa).

The next 4 helical transmembrane spans lie at 1-23 (MGYC…CVLE), 35-55 (APIL…FGTI), 62-82 (ITGY…VICF), and 153-173 (LQIV…KCIT).

This sequence belongs to the NKAIN family. As to quaternary structure, interacts with ATP1B1. Expressed in fetal brain. Weakly expressed in adult brain and thymus. Not expressed in any other normal tissue examined.

It is found in the cell membrane. This is Sodium/potassium-transporting ATPase subunit beta-1-interacting protein 2 (NKAIN2) from Homo sapiens (Human).